A 160-amino-acid chain; its full sequence is MPSFDIVSEIDTVELRNAVDNSNRELSTRFDFRNVQASFELVEQTVKVSAEGDFQLKQMRDILRGHLAKRGVDANSMDAKTAEQTGKNWHQDIVFLQGIETPMAKKIVKLIKDAKLKVQASIQGDKVRVTGKKRDDLQETIAAIRTAELGQPFQFNNFRD.

This sequence belongs to the YajQ family.

Functionally, nucleotide-binding protein. This is Nucleotide-binding protein VV1636 from Vibrio vulnificus (strain YJ016).